Reading from the N-terminus, the 134-residue chain is Large ribosomal subunit protein bL17 (134 aa).

This sequence belongs to the bacterial ribosomal protein bL17 family. As to quaternary structure, part of the 50S ribosomal subunit. Contacts protein L32.

This is Large ribosomal subunit protein bL17 from Colwellia psychrerythraea (strain 34H / ATCC BAA-681) (Vibrio psychroerythus).